Consider the following 226-residue polypeptide: Leucyl/phenylalanyl-tRNA--protein transferase (226 aa).

It belongs to the L/F-transferase family.

It is found in the cytoplasm. The enzyme catalyses N-terminal L-lysyl-[protein] + L-leucyl-tRNA(Leu) = N-terminal L-leucyl-L-lysyl-[protein] + tRNA(Leu) + H(+). It carries out the reaction N-terminal L-arginyl-[protein] + L-leucyl-tRNA(Leu) = N-terminal L-leucyl-L-arginyl-[protein] + tRNA(Leu) + H(+). It catalyses the reaction L-phenylalanyl-tRNA(Phe) + an N-terminal L-alpha-aminoacyl-[protein] = an N-terminal L-phenylalanyl-L-alpha-aminoacyl-[protein] + tRNA(Phe). Functions in the N-end rule pathway of protein degradation where it conjugates Leu, Phe and, less efficiently, Met from aminoacyl-tRNAs to the N-termini of proteins containing an N-terminal arginine or lysine. In Pseudomonas entomophila (strain L48), this protein is Leucyl/phenylalanyl-tRNA--protein transferase.